The following is a 113-amino-acid chain: Carboxysome shell protein CcmK1 (113 aa).

One can recognise a BMC domain in the interval 4–90 (AVGMIETLGF…PHENLEYVLP (87 aa)).

It belongs to the bacterial microcompartments protein family. CcmK subfamily. As to quaternary structure, homohexamer. Interacts preferentially with CcmK2 and CcmK4a rather than itself in vitro.

Its subcellular location is the carboxysome. Its function is as follows. One of the shell proteins of the carboxysome, a polyhedral inclusion where RuBisCO (ribulose bisphosphate carboxylase, rbcL-rbcS) is sequestered. Assembles into hexamers which make sheets that form the facets of the polyhedral carboxysome. The hexamer central pore probably regulates metabolite flux. In Thermosynechococcus vestitus (strain NIES-2133 / IAM M-273 / BP-1), this protein is Carboxysome shell protein CcmK1.